Here is a 369-residue protein sequence, read N- to C-terminus: Chorismate synthase (369 aa).

NADP(+) contacts are provided by R48 and R54. FMN-binding positions include 125–127, 238–239, G278, 293–297, and R319; these read RSS, NA, and KPTSS.

This sequence belongs to the chorismate synthase family. In terms of assembly, homotetramer. Requires FMNH2 as cofactor.

It carries out the reaction 5-O-(1-carboxyvinyl)-3-phosphoshikimate = chorismate + phosphate. It participates in metabolic intermediate biosynthesis; chorismate biosynthesis; chorismate from D-erythrose 4-phosphate and phosphoenolpyruvate: step 7/7. In terms of biological role, catalyzes the anti-1,4-elimination of the C-3 phosphate and the C-6 proR hydrogen from 5-enolpyruvylshikimate-3-phosphate (EPSP) to yield chorismate, which is the branch point compound that serves as the starting substrate for the three terminal pathways of aromatic amino acid biosynthesis. This reaction introduces a second double bond into the aromatic ring system. This is Chorismate synthase from Burkholderia thailandensis (strain ATCC 700388 / DSM 13276 / CCUG 48851 / CIP 106301 / E264).